Reading from the N-terminus, the 871-residue chain is MAMLVTNLSSSSFCFFSSPHLQNQKEIRSGVRVRKYVIFNRASLRTVSDCVDSITTFDRSVTDANTQLRRFCESGNLENAVKLLCVSGKWDIDPRTLCSVLQLCADSKSLKDGKEVDNFIRGNGFVIDSNLGSKLSLMYTNCGDLKEASRVFDEVKIEKALFWNILMNELAKSGDFSGSIGLFKKMMSSGVEMDSYTFSCVSKSFSSLRSVHGGEQLHGFILKSGFGERNSVGNSLVAFYLKNQRVDSARKVFDEMTERDVISWNSIINGYVSNGLAEKGLSVFVQMLVSGIEIDLATIVSVFAGCADSRLISLGRAVHSIGVKACFSREDRFCNTLLDMYSKCGDLDSAKAVFREMSDRSVVSYTSMIAGYAREGLAGEAVKLFEEMEEEGISPDVYTVTAVLNCCARYRLLDEGKRVHEWIKENDLGFDIFVSNALMDMYAKCGSMQEAELVFSEMRVKDIISWNTIIGGYSKNCYANEALSLFNLLLEEKRFSPDERTVACVLPACASLSAFDKGREIHGYIMRNGYFSDRHVANSLVDMYAKCGALLLAHMLFDDIASKDLVSWTVMIAGYGMHGFGKEAIALFNQMRQAGIEADEISFVSLLYACSHSGLVDEGWRFFNIMRHECKIEPTVEHYACIVDMLARTGDLIKAYRFIENMPIPPDATIWGALLCGCRIHHDVKLAEKVAEKVFELEPENTGYYVLMANIYAEAEKWEQVKRLRKRIGQRGLRKNPGCSWIEIKGRVNIFVAGDSSNPETENIEAFLRKVRARMIEEGYSPLTKYALIDAEEMEKEEALCGHSEKLAMALGIISSGHGKIIRVTKNLRVCGDCHEMAKFMSKLTRREIVLRDSNRFHQFKDGHCSCRGFW.

Residues 1–28 (MAMLVTNLSSSSFCFFSSPHLQNQKEIR) constitute a chloroplast transit peptide. 18 PPR repeats span residues 60-94 (SVTD…DIDP), 96-127 (TLCS…GFVI), 128-158 (DSNL…VKIE), 159-193 (KALF…GVEM), 194-228 (DSYT…GFGE), 229-259 (RNSV…MTER), 260-294 (DVIS…GIEI), 295-329 (DLAT…CFSR), 330-360 (EDRF…MSDR), 361-395 (SVVS…GISP), 396-430 (DVYT…DLGF), 431-465 (DIFV…DIIS), 466-497 (WNTI…RFSP), 498-532 (DERT…GYFS), 533-563 (DRHV…IASK), 564-598 (DLVS…GIEA), 599-629 (DEIS…MRHE), and 635-665 (TVEH…MPIP). Residues 670–745 (IWGALLCGCR…NPGCSWIEIK (76 aa)) are type E motif. The segment at 746 to 776 (GRVNIFVAGDSSNPETENIEAFLRKVRARMI) is type E(+) motif. Residues 777-871 (EEGYSPLTKY…DGHCSCRGFW (95 aa)) are type DYW motif.

Belongs to the PPR family. PCMP-H subfamily. Requires Zn(2+) as cofactor. In terms of tissue distribution, weakly expressed in leaves.

Its subcellular location is the plastid. The protein resides in the chloroplast. In terms of biological role, plays a major role in single RNA editing events in chloroplasts. Acts as a site-recognition transacting factor involved in the edition of the unique site (corresponding to cytidine-488) of rpoC1, which is a plastid-encoded subunit of the chloroplast DNA-directed RNA polymerase. May provide the catalytic activity for editing site conversion. Involved in leaf vasculature patterning. The protein is Pentatricopeptide repeat-containing protein DOT4, chloroplastic of Arabidopsis thaliana (Mouse-ear cress).